Consider the following 225-residue polypeptide: Methyl-CpG-binding domain-containing protein 6 (225 aa).

Positions 25–92 are disordered; that stretch reads GDGTLDSSAK…PGWRVEDKIR (68 aa). The 76-residue stretch at 71 to 146 folds into the MBD domain; it reads RKRAAPGDNW…ENTYFNPDHF (76 aa).

Homodimer and heterodimer with MBD5. Interacts with DDM1 via its MBD domain. Interacts with NTF2, RPS2C, HDA6 and AGO4. Expressed in rosette leaves, buds, flowers, stems, mature seeds and roots.

The protein resides in the nucleus. Its subcellular location is the chromosome. The protein localises to the nucleolus. Functionally, transcriptional regulator that binds CpG, CpNpN and CpNpG (N is A, T, or C) islands in promoters regardless the DNA methylation status. Plays probably a role in gene silencing. May associate with histone deacetylase proteins (HDAC). Required for nucleolar dominance that consist in the silencing of rRNA genes inherited from one progenitor in genetic hybrids. Recruited to rRNA genes in a DRM2-dependent manner. Maintains gene silencing by interacting with RNA binding proteins (e.g. NTF2, RPS2C, HDA6 and AGO4) and by regulating DNA methylation status. The polypeptide is Methyl-CpG-binding domain-containing protein 6 (Arabidopsis thaliana (Mouse-ear cress)).